A 360-amino-acid polypeptide reads, in one-letter code: MIIWLAELLQPHFSFFRLFEYLSFRAIASILTALCLSLWMGPRLIERLQMLQIGQVVRNDGPESHFSKRGTPTMGGVMILAAIIITVLMWADLSNPYVWAVLVVLAGYGAVGFVDDYRKVVRKNTDGLIARWKYFWQSAIALVVAFALYAHGHDTAATQLVVPFFKDVMPQLGLLYIVLTYFVIVGTSNAVNLTDGLDGLAIMPTVMVAAGFAVIAWATGNVNFASYLHIPYIPYTSELVVVCTAIVGAGLGFLWFNTYPAQVFMGDVGSLALGGALGVIAVLVRQELVLVIMGGVFVMETLSVILQVGSYKLRGQRIFRMAPIHHHYELKGWPEPRVIVRFWIISMVLVLVGLATLKVR.

Helical transmembrane passes span 21-41 (YLSF…LWMG), 73-93 (TMGG…WADL), 94-114 (SNPY…VGFV), 132-152 (WKYF…YAHG), 168-188 (VMPQ…VGTS), 199-219 (GLAI…AWAT), 239-259 (LVVV…FNTY), 263-283 (VFMG…IAVL), 288-308 (LVLV…ILQV), and 338-358 (VIVR…ATLK).

The protein belongs to the glycosyltransferase 4 family. MraY subfamily. Mg(2+) is required as a cofactor.

The protein resides in the cell inner membrane. It carries out the reaction UDP-N-acetyl-alpha-D-muramoyl-L-alanyl-gamma-D-glutamyl-meso-2,6-diaminopimeloyl-D-alanyl-D-alanine + di-trans,octa-cis-undecaprenyl phosphate = di-trans,octa-cis-undecaprenyl diphospho-N-acetyl-alpha-D-muramoyl-L-alanyl-D-glutamyl-meso-2,6-diaminopimeloyl-D-alanyl-D-alanine + UMP. It participates in cell wall biogenesis; peptidoglycan biosynthesis. Its function is as follows. Catalyzes the initial step of the lipid cycle reactions in the biosynthesis of the cell wall peptidoglycan: transfers peptidoglycan precursor phospho-MurNAc-pentapeptide from UDP-MurNAc-pentapeptide onto the lipid carrier undecaprenyl phosphate, yielding undecaprenyl-pyrophosphoryl-MurNAc-pentapeptide, known as lipid I. The chain is Phospho-N-acetylmuramoyl-pentapeptide-transferase from Vibrio atlanticus (strain LGP32) (Vibrio splendidus (strain Mel32)).